Here is a 228-residue protein sequence, read N- to C-terminus: Geranylgeranylglyceryl phosphate synthase (228 aa).

Position 13 (Lys13) interacts with sn-glycerol 1-phosphate. The Mg(2+) site is built by Asp15 and Thr41. Sn-glycerol 1-phosphate is bound by residues 159 to 164 (YVEYSG), Gly189, and 209 to 210 (GN).

The protein belongs to the GGGP/HepGP synthase family. Group I subfamily. Requires Mg(2+) as cofactor.

The protein localises to the cytoplasm. It catalyses the reaction sn-glycerol 1-phosphate + (2E,6E,10E)-geranylgeranyl diphosphate = sn-3-O-(geranylgeranyl)glycerol 1-phosphate + diphosphate. It functions in the pathway membrane lipid metabolism; glycerophospholipid metabolism. In terms of biological role, prenyltransferase that catalyzes the transfer of the geranylgeranyl moiety of geranylgeranyl diphosphate (GGPP) to the C3 hydroxyl of sn-glycerol-1-phosphate (G1P). This reaction is the first ether-bond-formation step in the biosynthesis of archaeal membrane lipids. The protein is Geranylgeranylglyceryl phosphate synthase of Methanosphaerula palustris (strain ATCC BAA-1556 / DSM 19958 / E1-9c).